The chain runs to 72 residues: ATP synthase subunit c (72 aa).

2 helical membrane passes run 1 to 21 (MSLG…GAGI) and 48 to 68 (MFIG…FSFI).

The protein belongs to the ATPase C chain family. As to quaternary structure, F-type ATPases have 2 components, F(1) - the catalytic core - and F(0) - the membrane proton channel. F(1) has five subunits: alpha(3), beta(3), gamma(1), delta(1), epsilon(1). F(0) has three main subunits: a(1), b(2) and c(10-14). The alpha and beta chains form an alternating ring which encloses part of the gamma chain. F(1) is attached to F(0) by a central stalk formed by the gamma and epsilon chains, while a peripheral stalk is formed by the delta and b chains.

It localises to the cell membrane. Functionally, f(1)F(0) ATP synthase produces ATP from ADP in the presence of a proton or sodium gradient. F-type ATPases consist of two structural domains, F(1) containing the extramembraneous catalytic core and F(0) containing the membrane proton channel, linked together by a central stalk and a peripheral stalk. During catalysis, ATP synthesis in the catalytic domain of F(1) is coupled via a rotary mechanism of the central stalk subunits to proton translocation. In terms of biological role, key component of the F(0) channel; it plays a direct role in translocation across the membrane. A homomeric c-ring of between 10-14 subunits forms the central stalk rotor element with the F(1) delta and epsilon subunits. This Bacillus caldotenax protein is ATP synthase subunit c.